A 261-amino-acid polypeptide reads, in one-letter code: ATP synthase subunit a (261 aa).

The next 7 membrane-spanning stretches (helical) occupy residues 31–51, 64–84, 97–117, 126–146, 166–188, 201–223, and 235–255; these read IAFT…LIFM, WQAA…TNIG, LFMF…VVGV, LTVT…VGFW, IPMI…GLRL, VLAG…VSIP, and ELLV…LYLN.

It belongs to the ATPase A chain family. As to quaternary structure, F-type ATPases have 2 components, CF(1) - the catalytic core - and CF(0) - the membrane proton channel. CF(1) has five subunits: alpha(3), beta(3), gamma(1), delta(1), epsilon(1). CF(0) has three main subunits: a(1), b(2) and c(9-12). The alpha and beta chains form an alternating ring which encloses part of the gamma chain. CF(1) is attached to CF(0) by a central stalk formed by the gamma and epsilon chains, while a peripheral stalk is formed by the delta and b chains.

The protein localises to the cell inner membrane. Functionally, key component of the proton channel; it plays a direct role in the translocation of protons across the membrane. The protein is ATP synthase subunit a of Rhizorhabdus wittichii (strain DSM 6014 / CCUG 31198 / JCM 15750 / NBRC 105917 / EY 4224 / RW1) (Sphingomonas wittichii).